A 248-amino-acid chain; its full sequence is 3-deoxy-manno-octulosonate cytidylyltransferase (248 aa).

The protein belongs to the KdsB family.

Its subcellular location is the cytoplasm. It carries out the reaction 3-deoxy-alpha-D-manno-oct-2-ulosonate + CTP = CMP-3-deoxy-beta-D-manno-octulosonate + diphosphate. Its pathway is nucleotide-sugar biosynthesis; CMP-3-deoxy-D-manno-octulosonate biosynthesis; CMP-3-deoxy-D-manno-octulosonate from 3-deoxy-D-manno-octulosonate and CTP: step 1/1. The protein operates within bacterial outer membrane biogenesis; lipopolysaccharide biosynthesis. Activates KDO (a required 8-carbon sugar) for incorporation into bacterial lipopolysaccharide in Gram-negative bacteria. The sequence is that of 3-deoxy-manno-octulosonate cytidylyltransferase from Chlorobaculum tepidum (strain ATCC 49652 / DSM 12025 / NBRC 103806 / TLS) (Chlorobium tepidum).